Here is a 278-residue protein sequence, read N- to C-terminus: Purine nucleoside phosphorylase YlmD (278 aa).

Residues His-87, Cys-132, and His-149 each coordinate Zn(2+).

This sequence belongs to the purine nucleoside phosphorylase YfiH/LACC1 family. Homodimer. The cofactor is Cu(2+). Zn(2+) is required as a cofactor.

The enzyme catalyses adenosine + phosphate = alpha-D-ribose 1-phosphate + adenine. It carries out the reaction S-methyl-5'-thioadenosine + phosphate = 5-(methylsulfanyl)-alpha-D-ribose 1-phosphate + adenine. The catalysed reaction is inosine + phosphate = alpha-D-ribose 1-phosphate + hypoxanthine. It catalyses the reaction adenosine + H2O + H(+) = inosine + NH4(+). Functionally, purine nucleoside enzyme that catalyzes the phosphorolysis of adenosine and inosine nucleosides, yielding D-ribose 1-phosphate and the respective free bases, adenine and hypoxanthine. Also catalyzes the phosphorolysis of S-methyl-5'-thioadenosine into adenine and S-methyl-5-thio-alpha-D-ribose 1-phosphate. Also has adenosine deaminase activity. This is Purine nucleoside phosphorylase YlmD (ylmD) from Bacillus subtilis (strain 168).